The sequence spans 36 residues: Serine protease inhibitor 2 (36 aa).

Positions 1–36 (EISCEPGTTFQDKCNTCRCGKDGKSAAGCTLKACPQ) constitute a Pacifastin domain. 3 disulfide bridges follow: cysteine 4/cysteine 19, cysteine 14/cysteine 34, and cysteine 17/cysteine 29.

The protein belongs to the protease inhibitor I19 family. As to expression, expressed in hemolymph.

It is found in the secreted. Its function is as follows. Probable serine protease inhibitor. This is Serine protease inhibitor 2 from Melanoplus sanguinipes (Migratory grasshopper).